Consider the following 246-residue polypeptide: NAD-dependent protein deacetylase (246 aa).

Residues 1 to 246 (MKMKEFLDLL…RRVMEEGGIS (246 aa)) enclose the Deacetylase sirtuin-type domain. NAD(+) is bound by residues Ala22, Thr26, Phe33, Arg34, Gln98, Ile100, Asp101, and His116. Nicotinamide is bound at residue Phe33. Nicotinamide-binding residues include Ile100 and Asp101. Catalysis depends on His116, which acts as the Proton acceptor. Zn(2+) is bound by residues Cys124, Cys127, Cys148, and Cys151. The NAD(+) site is built by Ser189, Ser190, Asn214, Leu215, Gly216, Asp231, and Val232.

It belongs to the sirtuin family. Class U subfamily. The cofactor is Zn(2+).

The protein resides in the cytoplasm. It catalyses the reaction N(6)-acetyl-L-lysyl-[protein] + NAD(+) + H2O = 2''-O-acetyl-ADP-D-ribose + nicotinamide + L-lysyl-[protein]. With respect to regulation, non-competitively inhibited by nicotinamide in vitro and in vivo, but not by nicotinic acid. Nicotinamide inhibits the deacetylation activity by reacting with a reaction intermediate. Its function is as follows. NAD-dependent protein deacetylase which modulates the activities of several enzymes which are inactive in their acetylated form. Also has depropionylation activity in vitro. Also able to ADP-ribosylate peptide substrates with Arg or Lys in the +2 position. The role of this function in vivo is not clear. The protein is NAD-dependent protein deacetylase of Thermotoga maritima (strain ATCC 43589 / DSM 3109 / JCM 10099 / NBRC 100826 / MSB8).